A 329-amino-acid polypeptide reads, in one-letter code: Phenylalanine--tRNA ligase alpha subunit (329 aa).

Glu-254 lines the Mg(2+) pocket.

Belongs to the class-II aminoacyl-tRNA synthetase family. Phe-tRNA synthetase alpha subunit type 1 subfamily. As to quaternary structure, tetramer of two alpha and two beta subunits. Requires Mg(2+) as cofactor.

Its subcellular location is the cytoplasm. It carries out the reaction tRNA(Phe) + L-phenylalanine + ATP = L-phenylalanyl-tRNA(Phe) + AMP + diphosphate + H(+). In Haemophilus influenzae (strain ATCC 51907 / DSM 11121 / KW20 / Rd), this protein is Phenylalanine--tRNA ligase alpha subunit (pheS).